Consider the following 2146-residue polypeptide: YLP motif-containing protein 1 (2146 aa).

2 disordered regions span residues 1–381 and 562–880; these read MYPN…ARLK and PPVM…FKMQ. A compositionally biased stretch (pro residues) spans 14–26; the sequence is YPPPPVPPPPPVA. Low complexity-rich tracts occupy residues 27–48 and 58–79; these read LPEA…PSSS and LAQL…LQPH. 5 stretches are compositionally biased toward pro residues: residues 80 to 92, 101 to 113, 147 to 157, 165 to 175, and 183 to 194; these read HLPP…PPVM, QPPP…PPGP, PESPPVPPGSY, MPPPQPPPSYY, and YLPPAQPSPSQS. A compositionally biased stretch (low complexity) spans 195 to 237; it reads PPSQSYLAPTPSYSSSSSSSQSYLSHSQSYLPSSQASPSRPSQ. 2 stretches are compositionally biased toward polar residues: residues 256–279 and 286–308; these read NKTT…QQQA and STMT…LQQR. Basic residues predominate over residues 309–319; that stretch reads TKVHLPGHKKG. The segment covering 325-334 has biased composition (basic and acidic residues); that stretch reads DTPEPVKEEV. Pro residues-rich tracts occupy residues 349-368, 562-579, and 586-642; these read EEPP…PPEE, PPVM…PGMP, and GPPP…PQGI. The segment covering 643–663 has biased composition (low complexity); sequence PPQLTAAPVPPASSSQSSQVP. The span at 692–702 shows a compositional bias: polar residues; sequence AGPSEQVNSKA. K735 is subject to N6-methyllysine. S756 bears the Phosphoserine mark. Over residues 758 to 806 the composition is skewed to basic and acidic residues; the sequence is RGPRFDGPRRFEDLGSRCEGPRPKGPRFEGNRPDGPRPRYEGHPAEGTK. R814 carries the post-translational modification Omega-N-methylarginine. 2 stretches are compositionally biased toward polar residues: residues 820-835 and 868-880; these read FYIT…QSGP and DTSS…FKMQ. Phosphoserine is present on S829. Position 831 is an omega-N-methylarginine (R831). A Glycyl lysine isopeptide (Lys-Gly) (interchain with G-Cter in SUMO2) cross-link involves residue K891. Disordered regions lie at residues 895-1211 and 1243-1351; these read AAQS…GRNA and NRED…DDRW. 2 stretches are compositionally biased toward polar residues: residues 896–909 and 923–933; these read AQSN…QQEP and NWDQNVQSMET. Residue K983 forms a Glycyl lysine isopeptide (Lys-Gly) (interchain with G-Cter in SUMO1); alternate linkage. A Glycyl lysine isopeptide (Lys-Gly) (interchain with G-Cter in SUMO2); alternate cross-link involves residue K983. Basic and acidic residues-rich tracts occupy residues 994-1012, 1027-1036, and 1053-1093; these read NNQD…RLEG, RMEDTRDKGL, and KQED…REKV. A Glycyl lysine isopeptide (Lys-Gly) (interchain with G-Cter in SUMO1); alternate cross-link involves residue K1053. K1053 is covalently cross-linked (Glycyl lysine isopeptide (Lys-Gly) (interchain with G-Cter in SUMO2); alternate). 2 positions are modified to phosphoserine: S1100 and S1119. 2 stretches are compositionally biased toward basic and acidic residues: residues 1129–1211 and 1243–1264; these read GSRE…GRNA and NRED…RGPW. The segment covering 1266–1276 has biased composition (acidic residues); sequence DDWERDQDMDE. Residues 1277–1328 are compositionally biased toward basic and acidic residues; sequence DYNREMERDMDRDVDRISRPMDMYDRSLDNEWDRDYGRPLDEQESQFRERDI. Positions 1330-1342 are enriched in pro residues; sequence SLPPLPPLPPLPP. The residue at position 1402 (S1402) is a Phosphoserine. 3 disordered regions span residues 1407–1438, 1469–1573, and 1602–1828; these read PSDV…SLDS, QKEQ…EQER, and IPSA…PPGR. Low complexity predominate over residues 1417-1430; it reads AEHMPSSHHSSEMM. Residues 1469–1480 are compositionally biased toward basic and acidic residues; the sequence is QKEQLQKMKDFG. Residues 1505 to 1520 show a composition bias toward pro residues; the sequence is MYPPPGSYRPPPPMGK. Positions 1521-1539 are enriched in low complexity; sequence PPGSIVRPSAPPARSSVPV. Pro residues-rich tracts occupy residues 1540–1562 and 1606–1636; these read TRPP…PPVI and PVLP…PPPV. K1652 participates in a covalent cross-link: Glycyl lysine isopeptide (Lys-Gly) (interchain with G-Cter in SUMO2). Composition is skewed to basic and acidic residues over residues 1662–1696, 1704–1774, 1783–1793, and 1809–1828; these read ITLR…EPYF, ADHR…DRPV, GERRTYPEERM, and RVEK…PPGR. Residue K1710 forms a Glycyl lysine isopeptide (Lys-Gly) (interchain with G-Cter in SUMO2) linkage. Residues 2096–2103 form an involved in interaction with PPP1CA region; the sequence is KKRVRWAD.

Interacts with PPP1CA and NCOA5. Forms a complex with ILF2, ILF3, KHDRBS1, RBMX, NCOA5 and PPP1CA. Expressed in neuronal, neuroblastoma and embryonic kidney cell lines (at protein level).

Its subcellular location is the nucleus. The protein resides in the nucleus speckle. Plays a role in the reduction of telomerase activity during differentiation of embryonic stem cells by binding to the core promoter of TERT and controlling its down-regulation. This is YLP motif-containing protein 1 (YLPM1) from Homo sapiens (Human).